Consider the following 396-residue polypeptide: MSEYSLFTSESVSEGHPDKIADQISDAVLDAIIAEDKHARVACETLVKTGVAIVAGEITTSAWIDLEELVRKVIVDIGYDSSDVGYDGHTCGIINIIGKQSVDINQGVDRAKPEDQGAGDQGLMFGYASDETEVLMPAPICFSHRLVERQTEARKSGLLPWLRPDAKSQVTCRYENGKVVGIDAVVLSTQHNPEITQADLHEAVMELIIKHTLPAELLHKDTQFHINPTGKFVIGGPVGDCGLTGRKIIVDSYGGMARHGGGAFSGKDPSKVDRSAAYAGRYVAKNIVAAGLAERCEIQVSYAIGVAQPTSISINTFGTGKIGDDRIVQLVREHFDLRPYAITHMLDLLHPMYRPTAAYGHFGRTPVEMTVGNDSFTAFTWERTDKAEALRSDAGL.

H16 is a binding site for ATP. Position 18 (D18) interacts with Mg(2+). E44 is a binding site for K(+). 2 residues coordinate L-methionine: E57 and Q100. The flexible loop stretch occupies residues 100–110 (QSVDINQGVDR). ATP contacts are provided by residues 165-167 (DAK), 231-232 (KF), D240, 246-247 (RK), A263, and K267. An L-methionine-binding site is contributed by D240. L-methionine is bound at residue K271.

The protein belongs to the AdoMet synthase family. In terms of assembly, homotetramer; dimer of dimers. The cofactor is Mg(2+). Requires K(+) as cofactor.

The protein resides in the cytoplasm. It carries out the reaction L-methionine + ATP + H2O = S-adenosyl-L-methionine + phosphate + diphosphate. It participates in amino-acid biosynthesis; S-adenosyl-L-methionine biosynthesis; S-adenosyl-L-methionine from L-methionine: step 1/1. In terms of biological role, catalyzes the formation of S-adenosylmethionine (AdoMet) from methionine and ATP. The overall synthetic reaction is composed of two sequential steps, AdoMet formation and the subsequent tripolyphosphate hydrolysis which occurs prior to release of AdoMet from the enzyme. The protein is S-adenosylmethionine synthase of Azotobacter vinelandii (strain DJ / ATCC BAA-1303).